An 85-amino-acid chain; its full sequence is Kunitz-type serine protease inhibitor homolog beta-bungarotoxin BF B2 chain (85 aa).

An N-terminal signal peptide occupies residues 1-24 (MSSGGLLLLLGLLTLWAELTPISS). In terms of domain architecture, BPTI/Kunitz inhibitor spans 31–81 (CDKPPDTGRCGNNVRAFYYKPSTNKCVQFIYGGCNANGNHFKSDHLCRCQC). 3 disulfides stabilise this stretch: Cys-31–Cys-81, Cys-40–Cys-64, and Cys-56–Cys-77.

Belongs to the venom Kunitz-type family. Heterodimer; disulfide-linked. The A chains have phospholipase A2 activity and the B chains show homology with the basic protease inhibitors. In terms of tissue distribution, expressed by the venom gland.

The protein localises to the secreted. Beta-1-bungarotoxin is a presynaptic neurotoxin of the venom. The B chain is homologous to venom basic protease inhibitors but has no protease inhibitor activity and blocks voltage-gated potassium channels (Kv). The polypeptide is Kunitz-type serine protease inhibitor homolog beta-bungarotoxin BF B2 chain (Bungarus fasciatus (Banded krait)).